A 607-amino-acid chain; its full sequence is Glutamyl-tRNA(Gln) amidotransferase subunit E (607 aa).

The interval glycine 399–glutamate 428 is disordered.

Belongs to the GatB/GatE family. GatE subfamily. Heterodimer of GatD and GatE.

The enzyme catalyses L-glutamyl-tRNA(Gln) + L-glutamine + ATP + H2O = L-glutaminyl-tRNA(Gln) + L-glutamate + ADP + phosphate + H(+). Allows the formation of correctly charged Gln-tRNA(Gln) through the transamidation of misacylated Glu-tRNA(Gln) in organisms which lack glutaminyl-tRNA synthetase. The reaction takes place in the presence of glutamine and ATP through an activated gamma-phospho-Glu-tRNA(Gln). The GatDE system is specific for glutamate and does not act on aspartate. The polypeptide is Glutamyl-tRNA(Gln) amidotransferase subunit E (Pyrobaculum neutrophilum (strain DSM 2338 / JCM 9278 / NBRC 100436 / V24Sta) (Thermoproteus neutrophilus)).